Here is a 316-residue protein sequence, read N- to C-terminus: CXXC-type zinc finger protein 5 (316 aa).

The span at 1–10 (MSSLGGGSQD) shows a compositional bias: gly residues. Residues 1–95 (MSSLGGGSQD…SGGAGSMMGG (95 aa)) form a disordered region. Composition is skewed to low complexity over residues 11-27 (AGGS…SGSG) and 36-50 (SATV…VADD). The segment at 250–291 (GKKKRKRCGMCAPCRRRINCEQCSSCRNRKTGHQICKFRKCE) adopts a CXXC-type zinc-finger fold. A Nuclear localization signal motif is present at residues 251–256 (KKKRKR). The Zn(2+) site is built by C257, C260, C263, C269, C272, C275, C285, and C290.

As to quaternary structure, interacts with DVL1. Interacts with RBPJ. As to expression, expressed in neural stem cells (at protein level). Expressed in the dorsal telencephalon.

The protein resides in the nucleus. It localises to the cytoplasm. Its function is as follows. May indirectly participate in activation of the NF-kappa-B and MAPK pathways. Required for DNA damage-induced ATM phosphorylation, p53 activation and cell cycle arrest. Involved in myelopoiesis. Acts as a mediator of BMP4-mediated modulation of canonical Wnt signaling activity in neural stem cells. Binds to the oxygen responsive element of COX4I2 and represses its transcription under hypoxia conditions (4% oxygen), as well as normoxia conditions (20% oxygen). May repress COX4I2 transactivation induced by CHCHD2 and RBPJ. Binds preferentially to DNA containing cytidine-phosphate-guanosine (CpG) dinucleotides over CpH (H=A, T, and C), hemimethylated-CpG and hemimethylated-hydroxymethyl-CpG. In Rattus norvegicus (Rat), this protein is CXXC-type zinc finger protein 5 (Cxxc5).